Reading from the N-terminus, the 1499-residue chain is Streptococcal surface protein B (1499 aa).

Positions 1-37 (MQKREVFGFRKSKVAKTLCGAVLGAALIAIADQQVLA) are cleaved as a signal peptide. The disordered stretch occupies residues 50 to 84 (AVTTTGNPATNLPEAQGEATEAASQSQAQAGSKDG). Ag I/II A repeat units follow at residues 145 to 219 (KKTT…QKAN), 220 to 301 (EDSQ…KKAK), 302 to 383 (EDND…KQAN), and 384 to 465 (ATNE…KKDF). Disordered stretches follow at residues 689–709 (YADS…SEWD), 763–907 (TAPT…TPPV), and 1409–1472 (RTTT…TGTN). A compositionally biased stretch (basic and acidic residues) spans 694–705 (NAEKSRGARWDT). Positions 789 to 799 (PTPPVKTPDQP) are enriched in pro residues. Residues 800–815 (EPSKPEEPTYETEKPL) are compositionally biased toward basic and acidic residues. Over residues 828–838 (PTPPVKIPDQP) the composition is skewed to pro residues. Residues 839-854 (EPSKPEEPTYETEKPL) show a composition bias toward basic and acidic residues. Pro residues-rich tracts occupy residues 867–877 (PTPPVKTPDQP) and 888–907 (DPLP…TPPV). Residues 1428–1450 (KPKDPDKPETPKEPKVPSPKVED) are compositionally biased toward basic and acidic residues. The short motif at 1466-1470 (LPKTG) is the LPXTG sorting signal element. At Thr-1469 the chain carries Pentaglycyl murein peptidoglycan amidated threonine. Positions 1470-1499 (GTNDATYMPYLGLAALVGFLGLGLAKRKED) are cleaved as a propeptide — removed by sortase.

Belongs to the antigen I/II family.

It is found in the secreted. It localises to the cell wall. The protein resides in the cell surface. In terms of biological role, adhesin that mediates binding of bacteria to a variety of host cells. Plays a role in the bacterial invasion of dentinal tubules. A host immunostimulatory component, it modulates the innate immunity response. Plays a protective role against some antibiotics and cationic antimicrobial peptides (histatin-5, HTN3, but not beta-defensin 4A, DEFB4A). This chain is Streptococcal surface protein B, found in Streptococcus gordonii (strain Challis / ATCC 35105 / BCRC 15272 / CH1 / DL1 / V288).